Reading from the N-terminus, the 456-residue chain is Probable transcription factor At3g04930 (456 aa).

Residues 1-71 (MTSDHRDALF…LNSPSTSSLP (71 aa)) form a disordered region. Composition is skewed to acidic residues over residues 15–38 (ESPDPDEGGVADGGESDTDEDLRD) and 50–62 (AEAEDDDPEEEDL). S16 is subject to Phosphoserine.

Belongs to the GeBP family.

The polypeptide is Probable transcription factor At3g04930 (Arabidopsis thaliana (Mouse-ear cress)).